The following is a 402-amino-acid chain: Zinc finger protein 322 (402 aa).

The C2H2-type 1; atypical zinc-finger motif lies at 43-65 (YQCLECKQNFCENLALIMCERTH). 8 C2H2-type zinc fingers span residues 71-93 (YKCD…QRIH), 99-121 (YKCS…QRTH), 127-149 (YTCD…QRSH), 155-177 (YLCS…RRTH), 183-205 (FKCL…QRTH), 211-233 (YKCN…KRVH), 239-261 (YKCG…QRVH), and 267-289 (YKCL…QATH). The segment at 293 to 315 (FKCLEYEKSFNCSSDLIVHQRIH) adopts a C2H2-type 10; degenerate zinc-finger fold. The C2H2-type 11; degenerate zinc-finger motif lies at 351–373 (YKYTVCDKSFHQSSALLQHQTVH). S391 is subject to Phosphoserine.

It belongs to the krueppel C2H2-type zinc-finger protein family. In terms of assembly, interacts with POU5F1. As to expression, ubiquitous. Highly expressed in heart and skeletal muscle.

It is found in the cytoplasm. It localises to the nucleus. Transcriptional activator. Important for maintenance of pluripotency in embryonic stem cells. Binds directly to the POU5F1 distal enhancer and the NANOG proximal promoter, and enhances expression of both genes. Can also bind to numerous other gene promoters and regulates expression of many other pluripotency factors, either directly or indirectly. Promotes inhibition of MAPK signaling during embryonic stem cell differentiation. The polypeptide is Zinc finger protein 322 (ZNF322) (Homo sapiens (Human)).